A 328-amino-acid polypeptide reads, in one-letter code: MIRRVSTTSCLSATAFRSFTKWSFKSSQFHGESLDSSVSPLLIPGFHVFHCPDVVGIVAKLSDCIAAKGGNILGYDVFVPENKNVFYSRSEFIFDPVKWPRRQMDEDFQTIAQKFSALSSVVRVPSLDPKYKIALLLSKQDHCLVEMLHKWQDGKLPVDITCVISNHERAPNTHVMRFLQRHGISYHYLPTTDQNKIEEEILELVKGTDFLVLARYMQLLSGNFLKGYGKDVINIHHGLLPSFKGRNPVKQAFDAGVKLIGATTHFVTEELDSGPIIEQMVERVSHRDNLRSFVQKSEDLEKKCLMKAIKSYCELRVLPYGTQRTVVF.

The N-terminal 12 residues, 1–12, are a transit peptide targeting the mitochondrion; sequence MIRRVSTTSCLS. Positions 46–129 constitute an ACT domain; that stretch reads FHVFHCPDVV…SVVRVPSLDP (84 aa). Residue Asp272 is part of the active site.

It belongs to the PurU family. In terms of tissue distribution, expressed in leaves, cotyledons, roots, seeds and flowers.

The protein localises to the mitochondrion. The catalysed reaction is (6R)-10-formyltetrahydrofolate + H2O = (6S)-5,6,7,8-tetrahydrofolate + formate + H(+). Deformylase involved in photorespiration. Prevents excessive accumulation of 5-formyl tetrahydrofolate (THF), a potent inhibitor of the Gly decarboxylase/Ser hydroxymethyltransferase complex. This chain is Formyltetrahydrofolate deformylase 2, mitochondrial (PURU2), found in Arabidopsis thaliana (Mouse-ear cress).